A 330-amino-acid polypeptide reads, in one-letter code: 6-phosphogluconolactonase (330 aa).

The protein belongs to the cycloisomerase 2 family.

The catalysed reaction is 6-phospho-D-glucono-1,5-lactone + H2O = 6-phospho-D-gluconate + H(+). It participates in carbohydrate degradation; pentose phosphate pathway; D-ribulose 5-phosphate from D-glucose 6-phosphate (oxidative stage): step 2/3. Its function is as follows. Catalyzes the hydrolysis of 6-phosphogluconolactone to 6-phosphogluconate. The protein is 6-phosphogluconolactonase of Erwinia tasmaniensis (strain DSM 17950 / CFBP 7177 / CIP 109463 / NCPPB 4357 / Et1/99).